Consider the following 195-residue polypeptide: ATP-dependent Clp protease proteolytic subunit (195 aa).

Serine 101 acts as the Nucleophile in catalysis. Histidine 126 is an active-site residue.

This sequence belongs to the peptidase S14 family. As to quaternary structure, component of the chloroplastic Clp protease core complex.

The protein localises to the plastid. It localises to the chloroplast stroma. It carries out the reaction Hydrolysis of proteins to small peptides in the presence of ATP and magnesium. alpha-casein is the usual test substrate. In the absence of ATP, only oligopeptides shorter than five residues are hydrolyzed (such as succinyl-Leu-Tyr-|-NHMec, and Leu-Tyr-Leu-|-Tyr-Trp, in which cleavage of the -Tyr-|-Leu- and -Tyr-|-Trp bonds also occurs).. Functionally, cleaves peptides in various proteins in a process that requires ATP hydrolysis. Has a chymotrypsin-like activity. Plays a major role in the degradation of misfolded proteins. In Cucumis sativus (Cucumber), this protein is ATP-dependent Clp protease proteolytic subunit.